The following is a 310-amino-acid chain: Aspartate carbamoyltransferase catalytic subunit (310 aa).

2 residues coordinate carbamoyl phosphate: R59 and T60. K87 contacts L-aspartate. R109, H137, and Q140 together coordinate carbamoyl phosphate. R170 and R225 together coordinate L-aspartate. Carbamoyl phosphate is bound by residues G266 and P267.

This sequence belongs to the aspartate/ornithine carbamoyltransferase superfamily. ATCase family. In terms of assembly, heterododecamer (2C3:3R2) of six catalytic PyrB chains organized as two trimers (C3), and six regulatory PyrI chains organized as three dimers (R2).

It catalyses the reaction carbamoyl phosphate + L-aspartate = N-carbamoyl-L-aspartate + phosphate + H(+). Its pathway is pyrimidine metabolism; UMP biosynthesis via de novo pathway; (S)-dihydroorotate from bicarbonate: step 2/3. In terms of biological role, catalyzes the condensation of carbamoyl phosphate and aspartate to form carbamoyl aspartate and inorganic phosphate, the committed step in the de novo pyrimidine nucleotide biosynthesis pathway. The protein is Aspartate carbamoyltransferase catalytic subunit of Pelobacter propionicus (strain DSM 2379 / NBRC 103807 / OttBd1).